Here is a 317-residue protein sequence, read N- to C-terminus: MLLKRLCFAALFSLSMVGCTNAPNALAVNTTQKIIQYERNKSDLEIKSLTLASGDKMVYAENGNVAGEPLLLIHGFGGNKDNFTRIARQLEGYHLIIPDLLGFGESSKPMSADYRSEAQRTRLHELLQAKGLASNIHVGGNSMGGAISVAYAAKYPKDVKSLWLVDSAGFWSAGIPKSLEGATLENNPLLIKSNEDFYKMYDFVMYKPPYLPKSVKAVFAQERIKNKELDAKILEQIVTDNVEERAKIIAQYKIPTLVVWGDKDQIIKPETVNLIKKIIPQAQVIMMEDVGHVPMVEALDETADNYKAFRSILEAQR.

Positions 1 to 18 are cleaved as a signal peptide; it reads MLLKRLCFAALFSLSMVG. Cys-19 carries N-palmitoyl cysteine lipidation. The S-diacylglycerol cysteine moiety is linked to residue Cys-19. One can recognise an AB hydrolase-1 domain in the interval 69 to 296; sequence PLLLIHGFGG…MEDVGHVPMV (228 aa). The active site involves His-74. Ser-142 functions as the Nucleophile in the catalytic mechanism. Active-site charge relay system residues include Glu-270 and His-292.

It is found in the cell outer membrane. The catalysed reaction is a triacylglycerol + H2O = a diacylglycerol + a fatty acid + H(+). The sequence is that of Lipase 1 (lip1) from Psychrobacter immobilis.